The following is a 763-amino-acid chain: 5-methyltetrahydropteroyltriglutamate--homocysteine methyltransferase (763 aa).

Residues Arg-16–Lys-19 and Lys-117 each bind 5-methyltetrahydropteroyltri-L-glutamate. Residues Ile-438–Ser-440 and Glu-491 each bind L-homocysteine. L-methionine-binding positions include Ile-438–Ser-440 and Glu-491. 5-methyltetrahydropteroyltri-L-glutamate is bound by residues Arg-522–Cys-523 and Trp-568. Asp-606 is an L-homocysteine binding site. Position 606 (Asp-606) interacts with L-methionine. Glu-612 serves as a coordination point for 5-methyltetrahydropteroyltri-L-glutamate. Zn(2+) contacts are provided by His-648, Cys-650, and Glu-672. His-701 acts as the Proton donor in catalysis. Cys-733 is a Zn(2+) binding site.

This sequence belongs to the vitamin-B12 independent methionine synthase family. Zn(2+) is required as a cofactor.

The catalysed reaction is 5-methyltetrahydropteroyltri-L-glutamate + L-homocysteine = tetrahydropteroyltri-L-glutamate + L-methionine. It functions in the pathway amino-acid biosynthesis; L-methionine biosynthesis via de novo pathway; L-methionine from L-homocysteine (MetE route): step 1/1. Functionally, catalyzes the transfer of a methyl group from 5-methyltetrahydrofolate to homocysteine resulting in methionine formation. This is 5-methyltetrahydropteroyltriglutamate--homocysteine methyltransferase from Pseudomonas paraeruginosa (strain DSM 24068 / PA7) (Pseudomonas aeruginosa (strain PA7)).